A 512-amino-acid chain; its full sequence is N-fatty-acyl-amino acid synthase/hydrolase PM20D1 (512 aa).

Residues 1 to 34 (MAVSRWKAVGSTLLAAFLVGLVVLIAVLLIRTYT) form the signal peptide. 2 N-linked (GlcNAc...) asparagine glycosylation sites follow: Asn45 and Asn81. His134 contributes to the Zn(2+) binding site. Residue Asp136 is part of the active site. A Zn(2+)-binding site is contributed by Asp166. The active-site Proton acceptor is Glu200. Zn(2+) contacts are provided by Glu201 and Asp227. Asn450 carries an N-linked (GlcNAc...) asparagine glycan. Zn(2+) is bound at residue His472.

The protein belongs to the peptidase M20A family.

It is found in the secreted. It catalyses the reaction an N-acyl-L-amino acid + H2O = an L-alpha-amino acid + a carboxylate. The catalysed reaction is an N-acyl-aromatic L-alpha-amino acid + H2O = an aromatic L-alpha-amino acid + a carboxylate. The enzyme catalyses N-(5Z,8Z,11Z,14Z)-eicosatetraenoyl-glycine + H2O = (5Z,8Z,11Z,14Z)-eicosatetraenoate + glycine. It carries out the reaction N-hexadecanoyl-L-phenylalanine + H2O = hexadecanoate + L-phenylalanine. It catalyses the reaction N-octadecanoyl-L-phenylalanine + H2O = octadecanoate + L-phenylalanine. The catalysed reaction is N-(4Z,7Z,10Z,13Z,16Z,19Z-docosahexaenoyl)-L-phenylalanine + H2O = (4Z,7Z,10Z,13Z,16Z,19Z)-docosahexaenoate + L-phenylalanine. The enzyme catalyses N-(9Z-octadecenoyl)-L-asparagine + H2O = L-asparagine + (9Z)-octadecenoate. It carries out the reaction (9Z)-octadecenoate + glycine = N-(9Z-octadecenoyl)glycine + H2O. It catalyses the reaction N-(9Z-octadecenoyl)-L-lysine + H2O = L-lysine + (9Z)-octadecenoate. The catalysed reaction is N-(9Z-octadecenoyl)-L-methionine + H2O = (9Z)-octadecenoate + L-methionine. The enzyme catalyses N-(9Z-octadecenoyl)-L-serine + H2O = L-serine + (9Z)-octadecenoate. It carries out the reaction N-(9Z-octadecenoyl)-L-tryptophan + H2O = L-tryptophan + (9Z)-octadecenoate. It catalyses the reaction N-(9Z-octadecenoyl)-L-tyrosine + H2O = L-tyrosine + (9Z)-octadecenoate. The catalysed reaction is N-(9Z-octadecenoyl)-L-glutamine + H2O = L-glutamine + (9Z)-octadecenoate. The enzyme catalyses N-(5Z,8Z,11Z,14Z-eicosatetraenoyl)-L-serine + H2O = (5Z,8Z,11Z,14Z)-eicosatetraenoate + L-serine. It carries out the reaction (5Z,8Z,11Z,14Z)-eicosatetraenoate + L-phenylalanine = N-(5Z,8Z,11Z,14Z-eicosatetraenoyl)-L-phenylalanine + H2O. It catalyses the reaction N-(9Z-octadecenoyl)-L-leucine + H2O = L-leucine + (9Z)-octadecenoate. The catalysed reaction is L-phenylalanine + (9Z)-octadecenoate = N-(9Z-octadecenoyl)-L-phenylalanine + H2O. The protein operates within amino-acid metabolism. It functions in the pathway energy metabolism; electron transfer. Its pathway is lipid metabolism; fatty acid metabolism. Its activity is regulated as follows. Lipoproteins are powerful coactivators of PM20D1 activity in vitro and NAA biosynthesis in vivo. In terms of biological role, secreted enzyme that regulates the endogenous N-fatty acyl amino acid (NAAs) tissue and circulating levels by functioning as a bidirectional NAA synthase/hydrolase. It condenses free fatty acids and free amino acids to generate NAAs and bidirectionally catalyzes the reverse hydrolysis reaction. Some of these NAAs stimulate oxidative metabolism via mitochondrial uncoupling, increasing energy expenditure in a UPC1-independent manner. Thereby, this secreted protein may indirectly regulate whole body energy expenditure. PM20D1 circulates in tight association with both low- and high-density (LDL and HDL,respectively) lipoprotein particles. The protein is N-fatty-acyl-amino acid synthase/hydrolase PM20D1 of Xenopus tropicalis (Western clawed frog).